The sequence spans 414 residues: MAMVVSTWRDPQDEVPGSQGSQASQAPPVPGPPPGAPHTPQTPGQGGPASTPAQTAAGGQGGPGGPGSDKQQQQQHIECVVCGDKSSGKHYGQFTCEGCKSFFKRSVRRNLSYTCRANRNCPIDQHHRNQCQYCRLKKCLKVGMRREAVQRGRMPPTQPTHGQFALTNGDPLNCHSYLSGYISLLLRAEPYPTSRFGSQCMQPNNIMGIENICELAARMLFSAVEWARNIPFFPDLQITDQVALLRLTWSELFVLNAAQCSMPLHVAPLLAAAGLHASPMSADRVVAFMDHIRIFQEQVEKLKALHVDSAEYSCLKAIVLFTSDACGLSDVAHVESLQEKSQCALEEYVRSQYPNQPTRFGKLLLRLPSLRTVSSSVIEQLFFVRLVGKTPIETLIRDMLLSGSSFNWPYMAIQ.

A disordered region spans residues 1–72; the sequence is MAMVVSTWRD…PGGPGSDKQQ (72 aa). Positions 27–37 are enriched in pro residues; the sequence is PPVPGPPPGAP. Over residues 38-57 the composition is skewed to low complexity; the sequence is HTPQTPGQGGPASTPAQTAA. Phosphothreonine is present on Thr51. Residues 58 to 67 are compositionally biased toward gly residues; the sequence is GGQGGPGGPG. Positions 76-151 form a DNA-binding region, nuclear receptor; the sequence is HIECVVCGDK…VGMRREAVQR (76 aa). NR C4-type zinc fingers lie at residues 79–99 and 115–139; these read CVVCGDKSSGKHYGQFTCEGC and CRANRNCPIDQHHRNQCQYCRLKKC. The interval 117 to 414 is interaction with ZFPM2; the sequence is ANRNCPIDQH…SFNWPYMAIQ (298 aa). One can recognise an NR LBD domain in the interval 177–403; it reads YLSGYISLLL…TLIRDMLLSG (227 aa). The segment at 337-414 is important for dimerization; that stretch reads LQEKSQCALE…SFNWPYMAIQ (78 aa).

The protein belongs to the nuclear hormone receptor family. NR2 subfamily. Interacts with SQSTM1. Binds DNA as a dimer; homodimer or heterodimer with NR2F6. Interacts with NCOA1, NCOA2, NCOA3 and PPARGC1A. Interacts with ZFPM2. Ubiquitous. Expressed in the stromal cells of developing fetal ovaries.

The protein resides in the nucleus. Ligand-activated transcription factor. Activated by high concentrations of 9-cis-retinoic acid and all-trans-retinoic acid, but not by dexamethasone, cortisol or progesterone (in vitro). Regulation of the apolipoprotein A-I gene transcription. Binds to DNA site A. May be required to establish ovary identity during early gonad development. This chain is COUP transcription factor 2 (NR2F2), found in Homo sapiens (Human).